Consider the following 292-residue polypeptide: Inositol oxygenase (292 aa).

Residues arginine 33 and 88–90 (DES) each bind substrate. Positions 101, 128, and 129 each coordinate Fe cation. Substrate is bound by residues lysine 132 and 149–150 (GD). Fe cation is bound by residues histidine 201, histidine 227, and aspartate 260. 227–228 (HS) lines the substrate pocket.

Belongs to the myo-inositol oxygenase family. The cofactor is Fe cation.

It is found in the cytoplasm. It catalyses the reaction myo-inositol + O2 = D-glucuronate + H2O + H(+). Its pathway is polyol metabolism; myo-inositol degradation into D-glucuronate; D-glucuronate from myo-inositol: step 1/1. The polypeptide is Inositol oxygenase (miox) (Dictyostelium discoideum (Social amoeba)).